We begin with the raw amino-acid sequence, 175 residues long: Adenine phosphoribosyltransferase (175 aa).

This sequence belongs to the purine/pyrimidine phosphoribosyltransferase family. Homodimer.

The protein resides in the cytoplasm. The enzyme catalyses AMP + diphosphate = 5-phospho-alpha-D-ribose 1-diphosphate + adenine. It functions in the pathway purine metabolism; AMP biosynthesis via salvage pathway; AMP from adenine: step 1/1. Its function is as follows. Catalyzes a salvage reaction resulting in the formation of AMP, that is energically less costly than de novo synthesis. The polypeptide is Adenine phosphoribosyltransferase (Nitrosospira multiformis (strain ATCC 25196 / NCIMB 11849 / C 71)).